We begin with the raw amino-acid sequence, 180 residues long: ATP synthase subunit delta (180 aa).

Belongs to the ATPase delta chain family. In terms of assembly, F-type ATPases have 2 components, F(1) - the catalytic core - and F(0) - the membrane proton channel. F(1) has five subunits: alpha(3), beta(3), gamma(1), delta(1), epsilon(1). F(0) has three main subunits: a(1), b(2) and c(10-14). The alpha and beta chains form an alternating ring which encloses part of the gamma chain. F(1) is attached to F(0) by a central stalk formed by the gamma and epsilon chains, while a peripheral stalk is formed by the delta and b chains.

Its subcellular location is the cell inner membrane. In terms of biological role, f(1)F(0) ATP synthase produces ATP from ADP in the presence of a proton or sodium gradient. F-type ATPases consist of two structural domains, F(1) containing the extramembraneous catalytic core and F(0) containing the membrane proton channel, linked together by a central stalk and a peripheral stalk. During catalysis, ATP synthesis in the catalytic domain of F(1) is coupled via a rotary mechanism of the central stalk subunits to proton translocation. Functionally, this protein is part of the stalk that links CF(0) to CF(1). It either transmits conformational changes from CF(0) to CF(1) or is implicated in proton conduction. In Legionella pneumophila (strain Paris), this protein is ATP synthase subunit delta.